Here is a 599-residue protein sequence, read N- to C-terminus: Glycerophosphodiester phosphodiesterase domain-containing protein 5 (599 aa).

At 1–42 (MVKHQPLQYYEPQLCLSCLTGIYGCRWKRYQRSHDDTTKWER) the chain is on the cytoplasmic side. 2 cysteine pairs are disulfide-bonded: Cys-15-Cys-18 and Cys-25-Cys-576. A helical membrane pass occupies residues 43–63 (LWFLILTSSFFLTLVWFYFWW). Residues 64–87 (EVHNDYNEINWFLYNRMGYWSDWS) are Extracellular-facing. The chain crosses the membrane as a helical span at residues 88–108 (IPILVTTAAGFTYITVLLILA). At 109–125 (LCHIAVGQQMNLHWLHK) the chain is on the cytoplasmic side. Residues 126–146 (IGLMTTLITTVVTMSSIAQLW) traverse the membrane as a helical segment. Topologically, residues 147-160 (DDEWEMVFISLQAT) are extracellular. Residues 161–181 (APFLHIGALAAVTALSWLIAG) form a helical membrane-spanning segment. Residues 182 to 192 (QFARMEKATSQ) lie on the Cytoplasmic side of the membrane. The chain crosses the membrane as a helical span at residues 193 to 213 (MLMVTAYLAVVVALYLVPLTI). The Extracellular portion of the chain corresponds to 214–497 (SSPCIMEKKA…IWLMPPDEYR (284 aa)). Residues 228–485 (PAIIGHRGAP…DSSHVLRKVP (258 aa)) form the GP-PDE domain. N-linked (GlcNAc...) asparagine glycans are attached at residues Asn-301, Asn-336, Asn-352, Asn-374, and Asn-448. Residues 498 to 518 (LIWITSDLISFIIIVGVFIFQ) traverse the membrane as a helical segment. The Cytoplasmic portion of the chain corresponds to 519–599 (NYHNDQWRLG…DHRDTRLRMN (81 aa)).

The protein belongs to the glycerophosphoryl diester phosphodiesterase family. As to quaternary structure, interacts with PRDX1; forms a mixed-disulfide with PRDX1, leading to disrupt intramolecular disulfide bond between Cys-25 and Cys-576. In terms of processing, intramolecular disulfide bond between Cys-25 and Cys-576 is reduced by PRDX1. In terms of tissue distribution, detected in mature motor neurons.

Its subcellular location is the endomembrane system. The protein resides in the cytoplasm. It localises to the perinuclear region. It is found in the cell projection. The protein localises to the growth cone. The catalysed reaction is a 1,2-diacyl-sn-glycero-3-phospho-(1D-myo-inositol-4,5-bisphosphate) + H2O = 1D-myo-inositol 1,4,5-trisphosphate + a 1,2-diacyl-sn-glycerol + H(+). It carries out the reaction sn-glycerol 3-phosphocholine + H2O = sn-glycerol 3-phosphate + choline + H(+). Activated by PRDX1 by reduction of an intramolecular disulfide bond. In terms of biological role, glycerophosphodiester phosphodiesterase that promotes cell cycle exit and drives spinal motor neuron differentiation. Mediates the cleavage of glycosylphosphatidylinositol (GPI) anchor of target proteins: removes the GPI-anchor of RECK, leading to release RECK from the plasma membrane. May contribute to the osmotic regulation of cellular glycerophosphocholine. This is Glycerophosphodiester phosphodiesterase domain-containing protein 5 (GDPD5) from Gallus gallus (Chicken).